The primary structure comprises 62 residues: DNA-directed RNA polymerase subunit Rpo10 (62 aa).

Zn(2+) is bound by residues Cys6, Cys9, Cys43, and Cys44.

Belongs to the archaeal Rpo10/eukaryotic RPB10 RNA polymerase subunit family. In terms of assembly, part of the RNA polymerase complex. Zn(2+) serves as cofactor.

The protein localises to the cytoplasm. It catalyses the reaction RNA(n) + a ribonucleoside 5'-triphosphate = RNA(n+1) + diphosphate. In terms of biological role, DNA-dependent RNA polymerase (RNAP) catalyzes the transcription of DNA into RNA using the four ribonucleoside triphosphates as substrates. This is DNA-directed RNA polymerase subunit Rpo10 from Methanosarcina mazei (strain ATCC BAA-159 / DSM 3647 / Goe1 / Go1 / JCM 11833 / OCM 88) (Methanosarcina frisia).